A 1394-amino-acid chain; its full sequence is Tubulin glycylase 3E (1394 aa).

4 disordered regions span residues 201–230, 563–582, 620–663, and 682–706; these read KKKS…QRKE, NQKD…QNSI, DENE…TSNF, and STVK…NLKE. Residues 205 to 216 are compositionally biased toward low complexity; it reads NFQNKSQSQLNN. The span at 217-230 shows a compositional bias: basic and acidic residues; sequence HKNEEKKPSQQRKE. Positions 568–582 are enriched in low complexity; that stretch reads QSNQTSSVISQQNSI. The segment covering 627–655 has biased composition (polar residues); that stretch reads KENVLQQKKNQSNQIVTSQQQSNNYFKQE. Residues 682 to 703 are compositionally biased toward low complexity; sequence STVKNSDNNNQNQTNPQNQNTN. Positions 911–1250 constitute a TTL domain; that stretch reads RFIFNITVIA…QNNLQEDLEI (340 aa). Residues 1058–1061, K1079, and D1081 contribute to the ATP site; that span reads QKYI. 2 IQ domains span residues 1320 to 1349 and 1348 to 1377; these read QYWG…QKFT and FTFA…QQQT.

It is found in the cell projection. The protein localises to the cilium. The protein resides in the cytoplasm. It localises to the cytoskeleton. Its subcellular location is the cilium axoneme. Its function is as follows. Probable glycylase which modifies tubulin, generating side chains of glycine on the gamma-carboxyl groups of specific glutamate residues within the C-terminal tail of tubulin. This Tetrahymena thermophila (strain SB210) protein is Tubulin glycylase 3E (TTLL3E).